Reading from the N-terminus, the 1073-residue chain is Error-prone DNA polymerase (1073 aa).

A disordered region spans residues 41 to 73 (EAEPECLSTPRPGPGSTEVPGERRGSRQGERSG). Residues 60–73 (PGERRGSRQGERSG) are compositionally biased toward basic and acidic residues.

The protein belongs to the DNA polymerase type-C family. DnaE2 subfamily.

The protein resides in the cytoplasm. The enzyme catalyses DNA(n) + a 2'-deoxyribonucleoside 5'-triphosphate = DNA(n+1) + diphosphate. In terms of biological role, DNA polymerase involved in damage-induced mutagenesis and translesion synthesis (TLS). It is not the major replicative DNA polymerase. The sequence is that of Error-prone DNA polymerase from Corynebacterium efficiens (strain DSM 44549 / YS-314 / AJ 12310 / JCM 11189 / NBRC 100395).